The sequence spans 191 residues: Crossover junction endodeoxyribonuclease RuvC (191 aa).

Catalysis depends on residues D7, E67, and D140. The Mg(2+) site is built by D7, E67, and D140.

The protein belongs to the RuvC family. As to quaternary structure, homodimer which binds Holliday junction (HJ) DNA. The HJ becomes 2-fold symmetrical on binding to RuvC with unstacked arms; it has a different conformation from HJ DNA in complex with RuvA. In the full resolvosome a probable DNA-RuvA(4)-RuvB(12)-RuvC(2) complex forms which resolves the HJ. Requires Mg(2+) as cofactor.

The protein resides in the cytoplasm. It catalyses the reaction Endonucleolytic cleavage at a junction such as a reciprocal single-stranded crossover between two homologous DNA duplexes (Holliday junction).. The RuvA-RuvB-RuvC complex processes Holliday junction (HJ) DNA during genetic recombination and DNA repair. Endonuclease that resolves HJ intermediates. Cleaves cruciform DNA by making single-stranded nicks across the HJ at symmetrical positions within the homologous arms, yielding a 5'-phosphate and a 3'-hydroxyl group; requires a central core of homology in the junction. The consensus cleavage sequence is 5'-(A/T)TT(C/G)-3'. Cleavage occurs on the 3'-side of the TT dinucleotide at the point of strand exchange. HJ branch migration catalyzed by RuvA-RuvB allows RuvC to scan DNA until it finds its consensus sequence, where it cleaves and resolves the cruciform DNA. The chain is Crossover junction endodeoxyribonuclease RuvC from Pelodictyon phaeoclathratiforme (strain DSM 5477 / BU-1).